The following is a 451-amino-acid chain: MWEEINMIKIYTLGGYEEVGKNMTAVEYNGEVVIVDMGIRLDRVLIHEDVEFQKMSSKDLRKLGAIPDDRPIRNKKVVAIALSHGHLDHIGAVGKLAPHYPDVPIYGTPYTIRLAKSEIKGEEYFEVTNPLYETNYGEIVQVSENLAIEFVQITHSIPQSSIVVIHTPEGAVVYACDYKFDNNHPYGERPDYKRLKELGKEGVKVLIAESTRVAEETKTPSEAVAKMLLEDFFLYEGMEADGLIATTFASHIARLQELIEIANKMGRQAIFIGRSLAKYTGIAKQLGLIKMKGSRVLRSPNAVSKVLKEVSQARENYLLIVTGHQGEPGAILTRMANGELYDIGPRDTVVFSAGVIPNPLNVAQRYALETKLRMKGVRMIKNLHVSGHASKEDHRYLIRMLNPEYIVPAHGEFRMLTHYAELAEEEGYMIGKEVFISRNGHVVEIPGSLEG.

The Zn(2+) site is built by His-84, His-86, Asp-88, His-89, His-155, and Asp-177. 384-388 (HVSGH) lines the substrate pocket. Residue His-410 participates in Zn(2+) binding.

The protein belongs to the metallo-beta-lactamase superfamily. RNA-metabolizing metallo-beta-lactamase-like family. Archaeal RNase J subfamily. As to quaternary structure, homodimer. The cofactor is Zn(2+).

It is found in the cytoplasm. With respect to regulation, inhibited by 1,10-phenanthroline. Its function is as follows. A highly processive 5'-3' exoribonuclease; no evidence has been seen for endonuclease activity. Prefers 5'-phosphate or 5'-hydroxyl ends; 5'-triphosphate substrates are very poorly degraded, does not degrade circular RNA. Does not degrade pre-tRNA(Trp) suggesting it is inhibited by strong secondary structures. Also degrades ssNDA but not dsDNA. The protein is Ribonuclease J of Pyrococcus abyssi (strain GE5 / Orsay).